A 377-amino-acid chain; its full sequence is uncharacterized protein (377 aa).

Residues 1 to 22 (MKFKYGTVVLGSFLGLSVVLAA) form the signal peptide. Cysteine 23 is lipidated: N-palmitoyl cysteine. Cysteine 23 carries S-diacylglycerol cysteine lipidation. The disordered stretch occupies residues 217–260 (AKANGETNQKGRKAAKSNKTALVQLKNGADTTTNEENKDTKTSD). A compositionally biased stretch (basic and acidic residues) spans 251-260 (EENKDTKTSD).

Belongs to the MG185/MG260 family.

It localises to the cell membrane. This is an uncharacterized protein from Mycoplasma pneumoniae (strain ATCC 29342 / M129 / Subtype 1) (Mycoplasmoides pneumoniae).